A 634-amino-acid polypeptide reads, in one-letter code: Chaperone protein DnaK 2 (634 aa).

Position 197 is a phosphothreonine; by autocatalysis (Thr197). The span at 600 to 620 (ASAEASANAQAGPSSSSSSSS) shows a compositional bias: low complexity. The interval 600-634 (ASAEASANAQAGPSSSSSSSSGDDDVIDAEFSESK) is disordered. Positions 621–634 (GDDDVIDAEFSESK) are enriched in acidic residues.

Belongs to the heat shock protein 70 family.

In terms of biological role, acts as a chaperone. The protein is Chaperone protein DnaK 2 of Synechococcus sp. (strain ATCC 27144 / PCC 6301 / SAUG 1402/1) (Anacystis nidulans).